The chain runs to 436 residues: Cyclic nucleotide-binding domain-containing protein 1 (436 aa).

Positions 89–105 are enriched in basic and acidic residues; that stretch reads EQRELNEGKEESQHQQP. Positions 89-108 are disordered; it reads EQRELNEGKEESQHQQPDDS. 322–436 is a binding site for a nucleoside 3',5'-cyclic phosphate; it reads YYEEWPTLSI…IIEDKDLFVA (115 aa).

The chain is Cyclic nucleotide-binding domain-containing protein 1 (CNBD1) from Homo sapiens (Human).